The following is a 478-amino-acid chain: Solute carrier family 7 member 13 (478 aa).

The Cytoplasmic segment spans residues 1 to 14 (MAMDSKKEIRLKRE). Residues 15–35 (LGYFWGTNFLIINIIGAGIFV) traverse the membrane as a helical segment. Residues 36–47 (SPKGVLQHSSMN) are Extracellular-facing. Residues 48–68 (VGVSLCVWAVCAVLTLTSALC) form a helical membrane-spanning segment. The Cytoplasmic portion of the chain corresponds to 69–89 (SAEIGITFPYSGAHYYFLKRC). The chain crosses the membrane as a helical span at residues 90 to 110 (FGPLVAFLRLWTSLFLGPGLI). Topologically, residues 111 to 129 (ASQALLLAEYGVQPFYPSC) are extracellular. The helical transmembrane segment at 130-150 (SAPILPRKCLALAMLWIVGIL) threads the bilayer. Topologically, residues 151–163 (NSRGVKELSWLQT) are cytoplasmic. A helical transmembrane segment spans residues 164-184 (VSSVLKVGILGVISLSGLFLL). Topologically, residues 185-208 (VRGKKENVQRLQNAFDAEFPEVSQ) are extracellular. The helical transmembrane segment at 209 to 229 (LIEAIFQGYFAFSGGGCFTCI) threads the bilayer. The Cytoplasmic segment spans residues 230 to 242 (AGELKKPSKTIPR). A helical membrane pass occupies residues 243–263 (CIFTGLPLVTVVYLLANISYL). Topologically, residues 264–288 (TVLTPQEMLSSDAVALTWTDRVIPQ) are extracellular. The helical transmembrane segment at 289-309 (FTWTVPFAISASLFINLVINV) threads the bilayer. Over 310–338 (LETSRVLYIASENGQLPLLFCALNVHSSP) the chain is Cytoplasmic. Residues 339–359 (FIAVLLIISMASILIVLTNLI) traverse the membrane as a helical segment. A topological domain (extracellular) is located at residue D360. Residues 361-381 (LINYLYFVVSIWTALSIIGIL) form a helical membrane-spanning segment. Over 382–395 (KLRYQEPNLHRPYK) the chain is Cytoplasmic. A helical membrane pass occupies residues 396-416 (VFLPFTFIALGITLSLVLIPL). The Extracellular segment spans residues 417 to 423 (VKSPKLH). Residues 424 to 444 (YIYVFLFLLSGLVFYVPLIHF) traverse the membrane as a helical segment. The Cytoplasmic segment spans residues 445–478 (KVKFVWFQKLTCYLQLLFNICIPDVSDDHIHEES).

This sequence belongs to the amino acid-polyamine-organocation (APC) superfamily. As to quaternary structure, disulfide-linked heterodimer composed of the catalytic light subunit SLC7A13 and the heavy subunit SLC3A1. As to expression, expressed in renal tubules in the outer stripe of the outer medulla and medullary ray (at protein level). Detected in male but not in female kidney.

The protein resides in the apical cell membrane. It carries out the reaction L-cystine(out) + L-aspartate(in) = L-cystine(in) + L-aspartate(out). The catalysed reaction is L-cystine(out) = L-cystine(in). The enzyme catalyses L-aspartate(in) + L-glutamate(out) = L-aspartate(out) + L-glutamate(in). It catalyses the reaction L-aspartate(in) + L-glutamine(out) = L-aspartate(out) + L-glutamine(in). It carries out the reaction L-aspartate(in) + L-methionine(out) = L-aspartate(out) + L-methionine(in). The catalysed reaction is L-leucine(out) + L-aspartate(in) = L-leucine(in) + L-aspartate(out). The enzyme catalyses L-valine(out) + L-aspartate(in) = L-valine(in) + L-aspartate(out). It catalyses the reaction L-aspartate(in) + L-phenylalanine(out) = L-aspartate(out) + L-phenylalanine(in). It carries out the reaction L-tyrosine(out) + L-aspartate(in) = L-tyrosine(in) + L-aspartate(out). The catalysed reaction is L-tryptophan(out) + L-aspartate(in) = L-tryptophan(in) + L-aspartate(out). Its function is as follows. Associates with SLC3A1/rBAT to form a functional heterodimeric complex that transports anionic and neutral amino acids across the apical plasma membrane of renal epithelium. Preferentially mediates exchange transport, but can also operate via facilitated diffusion. May act as a major transporter for L-cystine in late proximal tubules, ensuring its reabsorption from the luminal fluid in exchange for cytosolic L-glutamate or L-aspartate. The protein is Solute carrier family 7 member 13 of Mus musculus (Mouse).